The sequence spans 45 residues: Osteocalcin 1 (45 aa).

The region spanning 1–41 (AAGQLSLTQLESLREVCELNLACEHMMDTEGIIAAYTAYYG) is the Gla domain. Ca(2+) contacts are provided by Glu-11, Glu-15, Glu-18, and Glu-24. Residues Glu-11, Glu-15, and Glu-18 each carry the 4-carboxyglutamate modification. Cys-17 and Cys-23 are oxidised to a cystine.

The protein belongs to the osteocalcin/matrix Gla protein family. Post-translationally, gamma-carboxyglutamate residues are formed by vitamin K dependent carboxylation by GGCX. These residues are essential for the binding of calcium.

The protein localises to the secreted. The carboxylated form is one of the main organic components of the bone matrix, which constitutes 1-2% of the total bone protein. The carboxylated form binds strongly to apatite and calcium. In Diplodus sargus (White seabream), this protein is Osteocalcin 1.